We begin with the raw amino-acid sequence, 129 residues long: Serum amyloid A-1 protein (129 aa).

A signal peptide spans 1–18; sequence MKLFTGLIFCSLVLGVSS. The tract at residues 19 to 44 is important for amyloid formation; the sequence is QWYSFIGEAAQGAWDMYRAYSDMIEA. Residues 92–129 form a disordered region; the sequence is GDSGHGVEDSKADQAANEWGRSGKDPNHFRPPGLPDKY.

It belongs to the SAA family. As to quaternary structure, homohexamer; dimer of trimers. Can form amyloid fibrils after partial proteolysis; the native, undenatured protein does not form amyloid fibrils (in vitro). Apolipoprotein of the HDL complex. Binds to heparin. Detected in liver.

The protein resides in the secreted. Functionally, major acute phase protein. In Neovison vison (American mink), this protein is Serum amyloid A-1 protein (SAA1).